Reading from the N-terminus, the 174-residue chain is Tat proofreading chaperone TtrD (174 aa).

This sequence belongs to the TorD/DmsD family. In terms of assembly, monomer.

The protein localises to the cytoplasm. Binds specifically to the Tat signal peptide of the TtrA subunit of the tetrathionate reductase. The sequence is that of Tat proofreading chaperone TtrD (ttrD) from Archaeoglobus fulgidus (strain ATCC 49558 / DSM 4304 / JCM 9628 / NBRC 100126 / VC-16).